The primary structure comprises 113 residues: Probable leucocin-A immunity protein (113 aa).

The protein belongs to the immunity protein EntA family.

Functionally, imparts immunity to leucocin-A to naturally sensitive host strains. The sequence is that of Probable leucocin-A immunity protein from Leuconostoc gelidum.